The chain runs to 65 residues: Large ribosomal subunit protein uL30 (65 aa).

This sequence belongs to the universal ribosomal protein uL30 family. In terms of assembly, part of the 50S ribosomal subunit.

This Methylobacillus flagellatus (strain ATCC 51484 / DSM 6875 / VKM B-1610 / KT) protein is Large ribosomal subunit protein uL30.